A 104-amino-acid polypeptide reads, in one-letter code: Co-chaperonin GroES 2 (104 aa).

Belongs to the GroES chaperonin family. As to quaternary structure, heptamer of 7 subunits arranged in a ring. Interacts with the chaperonin GroEL.

It is found in the cytoplasm. Together with the chaperonin GroEL, plays an essential role in assisting protein folding. The GroEL-GroES system forms a nano-cage that allows encapsulation of the non-native substrate proteins and provides a physical environment optimized to promote and accelerate protein folding. GroES binds to the apical surface of the GroEL ring, thereby capping the opening of the GroEL channel. The polypeptide is Co-chaperonin GroES 2 (Bradyrhizobium diazoefficiens (strain JCM 10833 / BCRC 13528 / IAM 13628 / NBRC 14792 / USDA 110)).